We begin with the raw amino-acid sequence, 404 residues long: Cysteine desulfurase IscS (404 aa).

Pyridoxal 5'-phosphate contacts are provided by residues 75 to 76 (AT), Asn-155, Gln-183, and 203 to 205 (SAH). Residue Lys-206 is modified to N6-(pyridoxal phosphate)lysine. Thr-243 is a binding site for pyridoxal 5'-phosphate. Catalysis depends on Cys-328, which acts as the Cysteine persulfide intermediate. Cys-328 is a binding site for [2Fe-2S] cluster.

This sequence belongs to the class-V pyridoxal-phosphate-dependent aminotransferase family. NifS/IscS subfamily. Homodimer. Forms a heterotetramer with IscU, interacts with other sulfur acceptors. The cofactor is pyridoxal 5'-phosphate.

The protein resides in the cytoplasm. It carries out the reaction (sulfur carrier)-H + L-cysteine = (sulfur carrier)-SH + L-alanine. It participates in cofactor biosynthesis; iron-sulfur cluster biosynthesis. Master enzyme that delivers sulfur to a number of partners involved in Fe-S cluster assembly, tRNA modification or cofactor biosynthesis. Catalyzes the removal of elemental sulfur atoms from cysteine to produce alanine. Functions as a sulfur delivery protein for Fe-S cluster synthesis onto IscU, an Fe-S scaffold assembly protein, as well as other S acceptor proteins. The chain is Cysteine desulfurase IscS from Vibrio vulnificus (strain YJ016).